The sequence spans 105 residues: Heat shock protein HspQ (105 aa).

Residues 77-105 form a disordered region; it reads MRDEHPEQPSMDELARTIRKQLQAPRLRN.

Belongs to the HspQ family.

It is found in the cytoplasm. Functionally, involved in the degradation of certain denaturated proteins, including DnaA, during heat shock stress. This Salmonella arizonae (strain ATCC BAA-731 / CDC346-86 / RSK2980) protein is Heat shock protein HspQ.